The primary structure comprises 389 residues: ATP phosphoribosyltransferase regulatory subunit (389 aa).

This sequence belongs to the class-II aminoacyl-tRNA synthetase family. HisZ subfamily. Heteromultimer composed of HisG and HisZ subunits.

It is found in the cytoplasm. The protein operates within amino-acid biosynthesis; L-histidine biosynthesis; L-histidine from 5-phospho-alpha-D-ribose 1-diphosphate: step 1/9. Required for the first step of histidine biosynthesis. May allow the feedback regulation of ATP phosphoribosyltransferase activity by histidine. This Moorella thermoacetica (strain ATCC 39073 / JCM 9320) protein is ATP phosphoribosyltransferase regulatory subunit.